Here is a 263-residue protein sequence, read N- to C-terminus: Phosphatidylglycerol--prolipoprotein diacylglyceryl transferase (263 aa).

The next 4 helical transmembrane spans lie at 16-36 (LAVS…WFYA), 55-75 (FVTY…ILLY), 92-112 (EGGM…YIFC), and 117-137 (LNFL…LFFG). Arg-138 lines the a 1,2-diacyl-sn-glycero-3-phospho-(1'-sn-glycerol) pocket. Transmembrane regions (helical) follow at residues 172–192 (QLYE…YAVF), 201–221 (GLNS…IEIF), and 234–254 (SLTM…YLII).

It belongs to the Lgt family.

Its subcellular location is the cell inner membrane. It carries out the reaction L-cysteinyl-[prolipoprotein] + a 1,2-diacyl-sn-glycero-3-phospho-(1'-sn-glycerol) = an S-1,2-diacyl-sn-glyceryl-L-cysteinyl-[prolipoprotein] + sn-glycerol 1-phosphate + H(+). The protein operates within protein modification; lipoprotein biosynthesis (diacylglyceryl transfer). Its function is as follows. Catalyzes the transfer of the diacylglyceryl group from phosphatidylglycerol to the sulfhydryl group of the N-terminal cysteine of a prolipoprotein, the first step in the formation of mature lipoproteins. The polypeptide is Phosphatidylglycerol--prolipoprotein diacylglyceryl transferase (Rickettsia bellii (strain OSU 85-389)).